The primary structure comprises 256 residues: Putative adhesin P1-like protein MPN_132 (256 aa).

Low complexity predominate over residues 56-72 (AVSESQAATSSTTTTAT). Disordered regions lie at residues 56–115 (AVSE…PYLH) and 149–235 (FGTD…EVVG). Polar residues predominate over residues 96 to 112 (KASTQGSGQTNSQNTSP). 2 stretches are compositionally biased toward low complexity: residues 155-179 (TQPQ…LGSV) and 211-222 (STSDGNTSSTNN).

The protein belongs to the adhesin P1 family.

The sequence is that of Putative adhesin P1-like protein MPN_132 from Mycoplasma pneumoniae (strain ATCC 29342 / M129 / Subtype 1) (Mycoplasmoides pneumoniae).